A 236-amino-acid polypeptide reads, in one-letter code: uncharacterized protein (236 aa).

This is an uncharacterized protein from Aquifex aeolicus (strain VF5).